The primary structure comprises 429 residues: 3-phosphoshikimate 1-carboxyvinyltransferase (429 aa).

The 3-phosphoshikimate site is built by Lys20, Ser21, and Arg25. A phosphoenolpyruvate-binding site is contributed by Lys20. Positions 89 and 118 each coordinate phosphoenolpyruvate. 3-phosphoshikimate contacts are provided by Ser164, Ser165, Gln166, Ser192, Asp311, and Lys338. Gln166 serves as a coordination point for phosphoenolpyruvate. Asp311 acts as the Proton acceptor in catalysis. Arg342 and Arg384 together coordinate phosphoenolpyruvate.

It belongs to the EPSP synthase family. In terms of assembly, monomer.

It is found in the cytoplasm. The catalysed reaction is 3-phosphoshikimate + phosphoenolpyruvate = 5-O-(1-carboxyvinyl)-3-phosphoshikimate + phosphate. It participates in metabolic intermediate biosynthesis; chorismate biosynthesis. Catalyzes the transfer of the enolpyruvyl moiety of phosphoenolpyruvate (PEP) to the 5-hydroxyl of shikimate-3-phosphate (S3P) to produce enolpyruvyl shikimate-3-phosphate and inorganic phosphate. The protein is 3-phosphoshikimate 1-carboxyvinyltransferase of Methanococcus vannielii (strain ATCC 35089 / DSM 1224 / JCM 13029 / OCM 148 / SB).